The following is a 207-amino-acid chain: Ras-related protein Rab7 (207 aa).

GTP is bound by residues G15–T22, D63–Q67, and N125–D128. 2 S-geranylgeranyl cysteine lipidation sites follow: C205 and C207. C207 is subject to Cysteine methyl ester.

It belongs to the small GTPase superfamily. Rab family.

Its subcellular location is the cell membrane. Functionally, protein transport. Probably involved in vesicular traffic. The protein is Ras-related protein Rab7 of Prunus armeniaca (Apricot).